Here is a 328-residue protein sequence, read N- to C-terminus: Serine protease 27 (328 aa).

The first 22 residues, 1–22 (MRQPHITALLLLPLLLRSGTEG), serve as a signal peptide directing secretion. Residues 23–37 (AEAMRACGHPRMFNR) constitute a propeptide, activation peptide. Residues 38–280 (MVGGEDALEG…HYQWIHQIIP (243 aa)) enclose the Peptidase S1 domain. Cysteine 63 and cysteine 79 are oxidised to a cystine. Histidine 78 acts as the Charge relay system in catalysis. N-linked (GlcNAc...) asparagine glycosylation occurs at asparagine 82. Catalysis depends on aspartate 127, which acts as the Charge relay system. Disulfide bonds link cysteine 161-cysteine 238, cysteine 194-cysteine 217, and cysteine 228-cysteine 256. Residue serine 232 is the Charge relay system of the active site.

This sequence belongs to the peptidase S1 family.

Its subcellular location is the secreted. The sequence is that of Serine protease 27 (Prss27) from Rattus norvegicus (Rat).